The primary structure comprises 656 residues: F-box/LRR-repeat protein 10 (656 aa).

One can recognise an F-box domain in the interval 20–66 (ERSLDLLPAALLETIMTKLDVASLCSLASTCKTLKSCVTRVLTFTPN). 16 LRR repeats span residues 71–96 (NVSL…KLDC), 120–145 (CRDF…CLGS), 151–176 (GRSI…ALMF), 194–221 (SDRL…EISG), 243–268 (VDCI…DIRD), 277–301 (VSDL…SLIR), 310–335 (FRRV…CLGG), 336–361 (FCRV…SIYH), 362–387 (GPKL…SLRR), 388–412 (CHLL…DLRG), 413–437 (CRNL…LLDG), 439–463 (DISD…SVRG), 464–491 (CRNL…DLSN), 492–517 (LPNL…QLRE), 518–551 (CRLI…DLYD), and 552–578 (CGGI…GITG). Positions 632–656 (ILGDEGDVEMEDAEDESEEDASEED) are disordered.

This chain is F-box/LRR-repeat protein 10 (FBL10), found in Arabidopsis thaliana (Mouse-ear cress).